The primary structure comprises 600 residues: CBP80/20-dependent translation initiation factor (600 aa).

Methionine 1 is subject to N-acetylmethionine. Residues 1–18 (MENSSAASASSEAGSSRS) are compositionally biased toward low complexity. Disordered regions lie at residues 1-20 (MENS…RSQE), 43-62 (DKTE…SQWT), 134-154 (KQPL…EDGD), and 175-370 (PHEA…SSPQ). The segment at 1–305 (MENSSAASAS…PPCSPDTLTP (305 aa)) is interaction with NCBP1/CBP80. Position 18 is a phosphoserine (serine 18). Residues 52-62 (QRTQSHISQWT) are compositionally biased toward polar residues. Positions 139–152 (HIDREGCGKGKLED) are enriched in basic and acidic residues. Basic residues predominate over residues 183-198 (TKKLFRRRRNDRRRQQ). Over residues 258 to 272 (PPGDKGEAGSHRNAK) the composition is skewed to basic and acidic residues. Threonine 289 is subject to Phosphothreonine. The residue at position 299 (serine 299) is a Phosphoserine. Basic and acidic residues predominate over residues 321 to 339 (AEIKHKDTVLPERLRERPK). The MIF4G domain occupies 378–579 (MEILNIMRNN…LEVIELHANS (202 aa)).

The protein belongs to the CTIF family. Interacts with NCBP1/CBP80; the interaction is direct. Associates with the eukaryotic translation initiation factor 3 (eIF-3) complex. As to expression, widely expressed.

Its subcellular location is the cytoplasm. The protein localises to the perinuclear region. Specifically required for the pioneer round of mRNA translation mediated by the cap-binding complex (CBC), that takes place during or right after mRNA export via the nuclear pore complex (NPC). Acts via its interaction with the NCBP1/CBP80 component of the CBC complex and recruits the 40S small subunit of the ribosome via eIF3. In contrast, it is not involved in steady state translation, that takes place when the CBC complex is replaced by cytoplasmic cap-binding protein eIF4E. Also required for nonsense-mediated mRNA decay (NMD), the pioneer round of mRNA translation mediated by the cap-binding complex playing a central role in nonsense-mediated mRNA decay (NMD). This Mus musculus (Mouse) protein is CBP80/20-dependent translation initiation factor (Ctif).